A 208-amino-acid chain; its full sequence is Component of Sp100-rs (208 aa).

One can recognise an HSR domain in the interval 6–121; that stretch reads GSPRMSTEQE…LRRSFECGAK (116 aa).

The protein is Component of Sp100-rs (Csprs) of Mus musculus (Mouse).